A 298-amino-acid polypeptide reads, in one-letter code: Chitin deacetylase (298 aa).

An N-terminal signal peptide occupies residues 1-16; it reads MLAPLFAALLAGAATA. A NodB homology domain is found at 39-222; sequence NTFALTFDDG…AIKAKGLTPV (184 aa). Aspartate 46 serves as the catalytic Proton acceptor. Position 46 (aspartate 46) interacts with acetate. Co(2+)-binding residues include aspartate 47, histidine 99, and histidine 103. Tyrosine 140 is an acetate binding site. Residue histidine 196 is the Proton donor of the active site. In terms of domain architecture, Chitin-binding type-1 spans 256–298; the sequence is DDTCGGSNGYVCQNSQCCSQWGWCGTTSEYCAAGCQAAYGPCT. Intrachain disulfides connect cysteine 259–cysteine 273, cysteine 267–cysteine 279, cysteine 272–cysteine 286, and cysteine 290–cysteine 297.

Belongs to the polysaccharide deacetylase family. Requires Co(2+) as cofactor.

It is found in the secreted. It catalyses the reaction [(1-&gt;4)-N-acetyl-beta-D-glucosaminyl](n) + n H2O = chitosan + n acetate. Inhibited by Fe(2+) and to a lesser extent by Mn(2+). Functionally, hydrolyzes the N-acetamido groups of N-acetyl-D-glucosamine polymers in chitin to form chitosan and acetate. May play a role in evasion of the host immune response; plant chitinases liberate chitin molecules from the fungal cell wall which act as elicitors of the plant immune response, deacetylation of the liberated chitin neutralizes elicitor activity. The sequence is that of Chitin deacetylase from Pestalotiopsis sp.